Here is a 375-residue protein sequence, read N- to C-terminus: Probable UDP-N-acetylglucosamine 2-epimerase (375 aa).

Belongs to the UDP-N-acetylglucosamine 2-epimerase family.

It localises to the cytoplasm. It catalyses the reaction UDP-N-acetyl-alpha-D-glucosamine = UDP-N-acetyl-alpha-D-mannosamine. Its pathway is glycan metabolism; exopolysaccharide EPS I biosynthesis. Functionally, may be involved in synthesis of N-acetyltrideoxygalactose, a component of exopolysaccharide EPS I which functions as a virulence factor. In Ralstonia solanacearum (Pseudomonas solanacearum), this protein is Probable UDP-N-acetylglucosamine 2-epimerase (epsC).